A 101-amino-acid chain; its full sequence is Apolipoprotein C-II (101 aa).

The first 22 residues, 1–22 (MGARHLLALLLVLLVLGFEVQG), serve as a signal peptide directing secretion. The segment at 66 to 74 (TMDEKIRDM) is lipid binding. The interval 78 to 101 (STAAVSTYVGIFTDQLLSLLKGED) is lipoprotein lipase cofactor.

It belongs to the apolipoprotein C2 family. Post-translationally, proapolipoprotein C-II is synthesized as a sialic acid containing glycoprotein which is subsequently desialylated prior to its proteolytic processing. Proapolipoprotein C-II, the major form found in plasma undergoes proteolytic cleavage of its N-terminal hexapeptide to generate apolipoprotein C-II, which occurs as the minor form in plasma.

Its subcellular location is the secreted. Component of chylomicrons, very low-density lipoproteins (VLDL), low-density lipoproteins (LDL), and high-density lipoproteins (HDL) in plasma. Plays an important role in lipoprotein metabolism as an activator of lipoprotein lipase. Both proapolipoprotein C-II and apolipoprotein C-II can activate lipoprotein lipase. In Tapirus terrestris (Lowland tapir), this protein is Apolipoprotein C-II (APOC2).